A 262-amino-acid chain; its full sequence is Acyl-[acyl-carrier-protein]--UDP-N-acetylglucosamine O-acyltransferase (262 aa).

It belongs to the transferase hexapeptide repeat family. LpxA subfamily. In terms of assembly, homotrimer.

The protein resides in the cytoplasm. It catalyses the reaction a (3R)-hydroxyacyl-[ACP] + UDP-N-acetyl-alpha-D-glucosamine = a UDP-3-O-[(3R)-3-hydroxyacyl]-N-acetyl-alpha-D-glucosamine + holo-[ACP]. Its pathway is glycolipid biosynthesis; lipid IV(A) biosynthesis; lipid IV(A) from (3R)-3-hydroxytetradecanoyl-[acyl-carrier-protein] and UDP-N-acetyl-alpha-D-glucosamine: step 1/6. Involved in the biosynthesis of lipid A, a phosphorylated glycolipid that anchors the lipopolysaccharide to the outer membrane of the cell. This Salmonella schwarzengrund (strain CVM19633) protein is Acyl-[acyl-carrier-protein]--UDP-N-acetylglucosamine O-acyltransferase.